Here is a 428-residue protein sequence, read N- to C-terminus: Dihydroorotase (428 aa).

Zn(2+) is bound by residues histidine 59 and histidine 61. Residues 61-63 (HLR) and asparagine 93 contribute to the substrate site. Zn(2+) contacts are provided by aspartate 151, histidine 178, and histidine 231. Asparagine 277 is a substrate binding site. Aspartate 304 contacts Zn(2+). Aspartate 304 is an active-site residue. Residues histidine 308 and 322-323 (FG) each bind substrate.

This sequence belongs to the metallo-dependent hydrolases superfamily. DHOase family. Class I DHOase subfamily. It depends on Zn(2+) as a cofactor.

It catalyses the reaction (S)-dihydroorotate + H2O = N-carbamoyl-L-aspartate + H(+). Its pathway is pyrimidine metabolism; UMP biosynthesis via de novo pathway; (S)-dihydroorotate from bicarbonate: step 3/3. In terms of biological role, catalyzes the reversible cyclization of carbamoyl aspartate to dihydroorotate. This chain is Dihydroorotase, found in Bacillus cereus (strain G9842).